A 338-amino-acid chain; its full sequence is Arginase, mitochondrial (338 aa).

The N-terminal 15 residues, 1-15 (MSTIARRGFHYMQRL), are a transit peptide targeting the mitochondrion. L-ornithine-binding positions include serine 73 and 92 to 95 (DSTN). 4 residues coordinate Mn(2+): histidine 157, aspartate 181, histidine 183, and aspartate 185. 185-187 (DLY) is a binding site for L-ornithine. 191–193 (EGN) is a binding site for substrate. Serine 220 contacts L-ornithine. 2 residues coordinate Mn(2+): aspartate 266 and aspartate 268. Glutamate 309 contributes to the substrate binding site.

Belongs to the arginase family. In terms of assembly, forms homohexamers. Requires Mn(2+) as cofactor.

It localises to the mitochondrion. The enzyme catalyses L-arginine + H2O = urea + L-ornithine. The catalysed reaction is agmatine + H2O = urea + putrescine. Its pathway is nitrogen metabolism; urea cycle; L-ornithine and urea from L-arginine: step 1/1. It functions in the pathway amine and polyamine biosynthesis; putrescine biosynthesis via agmatine pathway; putrescine from agmatine: step 1/1. Its function is as follows. Catalyzes the hydrolysis of L-arginine to urea and L-ornithine. The latter can be utilized in the urea cycle or as a precursor for the synthesis of both polyamines and proline. Possesses agmatinase activity. Catalyzes the formation of putrescine from agmatine. The sequence is that of Arginase, mitochondrial from Medicago truncatula (Barrel medic).